The primary structure comprises 423 residues: AP-1 complex subunit mu-1 (423 aa).

Serine 2 is modified (N-acetylserine). 3 positions are modified to phosphothreonine: threonine 152, threonine 154, and threonine 223. The 254-residue stretch at 168 to 421 folds into the MHD domain; sequence KNEVFLDVIE…ITQNGDYQLR (254 aa).

Belongs to the adaptor complexes medium subunit family. As to quaternary structure, adaptor protein complex 1 (AP-1) is a heterotetramer composed of two large adaptins (gamma-type subunit AP1G1 and beta-type subunit AP1B1), a medium adaptin (mu-type subunit AP1M1 or AP1M2) and a small adaptin (sigma-type subunit AP1S1 or AP1S2 or AP1S3). Interacts with MARCHF11. Phosphorylation of membrane-bound AP1M1/AP1M2 increases its affinity for sorting signals.

It localises to the golgi apparatus. Its subcellular location is the cytoplasmic vesicle. It is found in the clathrin-coated vesicle membrane. Functionally, subunit of clathrin-associated adaptor protein complex 1 that plays a role in protein sorting in the trans-Golgi network (TGN) and endosomes. The AP complexes mediate the recruitment of clathrin to membranes and the recognition of sorting signals within the cytosolic tails of transmembrane cargo molecules. This Mus musculus (Mouse) protein is AP-1 complex subunit mu-1 (Ap1m1).